The primary structure comprises 263 residues: Acetylglutamate kinase (263 aa).

Residues 48–49 (GG), Arg-70, and Asn-162 contribute to the substrate site.

It belongs to the acetylglutamate kinase family. ArgB subfamily.

It is found in the cytoplasm. The catalysed reaction is N-acetyl-L-glutamate + ATP = N-acetyl-L-glutamyl 5-phosphate + ADP. It functions in the pathway amino-acid biosynthesis; L-arginine biosynthesis; N(2)-acetyl-L-ornithine from L-glutamate: step 2/4. In terms of biological role, catalyzes the ATP-dependent phosphorylation of N-acetyl-L-glutamate. In Vibrio vulnificus (strain YJ016), this protein is Acetylglutamate kinase.